Reading from the N-terminus, the 430-residue chain is Phosphomethylpyrimidine synthase (430 aa).

Residues N68, M96, Y125, H164, 186–188 (SRG), 227–230 (DALR), and E266 each bind substrate. H270 contributes to the Zn(2+) binding site. Y293 contacts substrate. H334 contributes to the Zn(2+) binding site. [4Fe-4S] cluster contacts are provided by C410, C413, and C417.

This sequence belongs to the ThiC family. [4Fe-4S] cluster serves as cofactor.

It catalyses the reaction 5-amino-1-(5-phospho-beta-D-ribosyl)imidazole + S-adenosyl-L-methionine = 4-amino-2-methyl-5-(phosphooxymethyl)pyrimidine + CO + 5'-deoxyadenosine + formate + L-methionine + 3 H(+). Its pathway is cofactor biosynthesis; thiamine diphosphate biosynthesis. Catalyzes the synthesis of the hydroxymethylpyrimidine phosphate (HMP-P) moiety of thiamine from aminoimidazole ribotide (AIR) in a radical S-adenosyl-L-methionine (SAM)-dependent reaction. The chain is Phosphomethylpyrimidine synthase from Pyrobaculum aerophilum (strain ATCC 51768 / DSM 7523 / JCM 9630 / CIP 104966 / NBRC 100827 / IM2).